Reading from the N-terminus, the 128-residue chain is Modulator protein MzrA (128 aa).

The Cytoplasmic segment spans residues 1–13; the sequence is MLALLRPYLSTRV. Residues 14–34 traverse the membrane as a helical segment; it reads LCVLVVCFSALMLVAFIPTLF. The Periplasmic segment spans residues 35–128; it reads RNDTALQIRA…RLSLRKQSVG (94 aa).

It belongs to the MzrA family. As to quaternary structure, interacts with EnvZ.

It is found in the cell inner membrane. In terms of biological role, modulates the activity of the EnvZ/OmpR two-component regulatory system, probably by directly modulating EnvZ enzymatic activity and increasing stability of phosphorylated OmpR. The protein is Modulator protein MzrA of Erwinia billingiae (strain Eb661).